The primary structure comprises 696 residues: Probable glutamine--fructose-6-phosphate aminotransferase [isomerizing] (696 aa).

Cys2 serves as the catalytic For GATase activity. Positions 2-303 (CGIFGYINYL…DDDIAHVRDG (302 aa)) constitute a Glutamine amidotransferase type-2 domain. 2 SIS domains span residues 375–514 (YYDI…DSVS) and 547–686 (AIEQ…VDQP).

The enzyme catalyses D-fructose 6-phosphate + L-glutamine = D-glucosamine 6-phosphate + L-glutamate. The protein operates within nucleotide-sugar biosynthesis; UDP-N-acetyl-alpha-D-glucosamine biosynthesis; alpha-D-glucosamine 6-phosphate from D-fructose 6-phosphate: step 1/1. Functionally, involved in amino sugar synthesis (formation of chitin, supplies the amino sugars of asparagine-linked oligosaccharides of glycoproteins). In Schizosaccharomyces pombe (strain 972 / ATCC 24843) (Fission yeast), this protein is Probable glutamine--fructose-6-phosphate aminotransferase [isomerizing].